A 437-amino-acid polypeptide reads, in one-letter code: GTPase Obg (437 aa).

Residues 2–160 (SLFLDTARIE…KILLLELRVL (159 aa)) form the Obg domain. Positions 161–338 (ADVGLVGFPS…LLARTSELLA (178 aa)) constitute an OBG-type G domain. Residues 167–174 (GFPSVGKS), 192–196 (FTTIT), 214–217 (DMPG), 284–287 (NKMD), and 319–321 (SGL) contribute to the GTP site. The Mg(2+) site is built by serine 174 and threonine 194. The 79-residue stretch at 359 to 437 (GFEEEEKPFK…IQKFEFEFVD (79 aa)) folds into the OCT domain.

Belongs to the TRAFAC class OBG-HflX-like GTPase superfamily. OBG GTPase family. As to quaternary structure, monomer. Mg(2+) is required as a cofactor.

Its subcellular location is the cytoplasm. An essential GTPase which binds GTP, GDP and possibly (p)ppGpp with moderate affinity, with high nucleotide exchange rates and a fairly low GTP hydrolysis rate. Plays a role in control of the cell cycle, stress response, ribosome biogenesis and in those bacteria that undergo differentiation, in morphogenesis control. In Lactococcus lactis subsp. lactis (strain IL1403) (Streptococcus lactis), this protein is GTPase Obg.